The chain runs to 296 residues: Probable endonuclease 4 (296 aa).

Residues H68, H109, E144, D178, H181, H213, D226, H228, and E258 each contribute to the Zn(2+) site.

It belongs to the AP endonuclease 2 family. It depends on Zn(2+) as a cofactor.

The enzyme catalyses Endonucleolytic cleavage to 5'-phosphooligonucleotide end-products.. Functionally, endonuclease IV plays a role in DNA repair. It cleaves phosphodiester bonds at apurinic or apyrimidinic (AP) sites, generating a 3'-hydroxyl group and a 5'-terminal sugar phosphate. This chain is Probable endonuclease 4, found in Pediococcus pentosaceus (strain ATCC 25745 / CCUG 21536 / LMG 10740 / 183-1w).